Consider the following 161-residue polypeptide: 3-isopropylmalate dehydratase small subunit (161 aa).

Belongs to the LeuD family. LeuD type 2 subfamily. As to quaternary structure, heterodimer of LeuC and LeuD.

It catalyses the reaction (2R,3S)-3-isopropylmalate = (2S)-2-isopropylmalate. The protein operates within amino-acid biosynthesis; L-leucine biosynthesis; L-leucine from 3-methyl-2-oxobutanoate: step 2/4. Its function is as follows. Catalyzes the isomerization between 2-isopropylmalate and 3-isopropylmalate, via the formation of 2-isopropylmaleate. The chain is 3-isopropylmalate dehydratase small subunit from Pyrobaculum calidifontis (strain DSM 21063 / JCM 11548 / VA1).